The chain runs to 644 residues: Kelch-like protein 34 (644 aa).

The 68-residue stretch at 29–96 folds into the BTB domain; that stretch reads CDVTLETEGS…IYTAWLSLSM (68 aa). The BACK domain occupies 131 to 238; it reads CCFAANVAAR…PADVLRRVYS (108 aa). The tract at residues 304-329 is disordered; the sequence is AARGQVAAPEPEEEEEELEEEEEEEE. Residues 313–329 are compositionally biased toward acidic residues; it reads EPEEEEEELEEEEEEEE. Kelch repeat units lie at residues 320 to 366, 367 to 425, 426 to 473, 475 to 526, 528 to 571, and 573 to 623; these read ELEE…TAGN, FLFV…AVGE, RLLA…VGDR, VVYI…VLRG, VFAF…VVEE, and ALLL…VLQL.

The sequence is that of Kelch-like protein 34 (KLHL34) from Homo sapiens (Human).